We begin with the raw amino-acid sequence, 516 residues long: Probable cytosol aminopeptidase (516 aa).

Mn(2+) contacts are provided by K288 and D293. Residue K300 is part of the active site. The Mn(2+) site is built by D311, D370, and E372. The active site involves R374.

Belongs to the peptidase M17 family. It depends on Mn(2+) as a cofactor.

The protein localises to the cytoplasm. The catalysed reaction is Release of an N-terminal amino acid, Xaa-|-Yaa-, in which Xaa is preferably Leu, but may be other amino acids including Pro although not Arg or Lys, and Yaa may be Pro. Amino acid amides and methyl esters are also readily hydrolyzed, but rates on arylamides are exceedingly low.. The enzyme catalyses Release of an N-terminal amino acid, preferentially leucine, but not glutamic or aspartic acids.. Functionally, presumably involved in the processing and regular turnover of intracellular proteins. Catalyzes the removal of unsubstituted N-terminal amino acids from various peptides. This chain is Probable cytosol aminopeptidase, found in Cupriavidus taiwanensis (strain DSM 17343 / BCRC 17206 / CCUG 44338 / CIP 107171 / LMG 19424 / R1) (Ralstonia taiwanensis (strain LMG 19424)).